Consider the following 340-residue polypeptide: L-threonine 3-dehydrogenase (340 aa).

A Zn(2+)-binding site is contributed by Cys-38. Catalysis depends on charge relay system residues Thr-40 and His-43. Residues His-63, Glu-64, Cys-93, Cys-96, Cys-99, and Cys-107 each coordinate Zn(2+). NAD(+) contacts are provided by residues Ile-175, Asp-195, Arg-200, 261-263, and 285-286; these read LGI and IY.

This sequence belongs to the zinc-containing alcohol dehydrogenase family. Homotetramer. The cofactor is Zn(2+).

It localises to the cytoplasm. The enzyme catalyses L-threonine + NAD(+) = (2S)-2-amino-3-oxobutanoate + NADH + H(+). Its pathway is amino-acid degradation; L-threonine degradation via oxydo-reductase pathway; glycine from L-threonine: step 1/2. Functionally, catalyzes the NAD(+)-dependent oxidation of L-threonine to 2-amino-3-ketobutyrate. This Xanthomonas campestris pv. campestris (strain ATCC 33913 / DSM 3586 / NCPPB 528 / LMG 568 / P 25) protein is L-threonine 3-dehydrogenase.